The sequence spans 203 residues: Large ribosomal subunit protein bL25 (203 aa).

Belongs to the bacterial ribosomal protein bL25 family. CTC subfamily. In terms of assembly, part of the 50S ribosomal subunit; part of the 5S rRNA/L5/L18/L25 subcomplex. Contacts the 5S rRNA. Binds to the 5S rRNA independently of L5 and L18.

Functionally, this is one of the proteins that binds to the 5S RNA in the ribosome where it forms part of the central protuberance. The sequence is that of Large ribosomal subunit protein bL25 from Dechloromonas aromatica (strain RCB).